Here is a 611-residue protein sequence, read N- to C-terminus: Threonine--tRNA ligase (611 aa).

The tract at residues 1–145 (MRLLLIHSDH…TILPGEGAAA (145 aa)) is editing domain. Positions 195-487 (VHVDLMRAKE…TAAQEVPSFP (293 aa)) are catalytic. Zn(2+) is bound by residues Cys287, His339, and His460.

Belongs to the class-II aminoacyl-tRNA synthetase family. Homodimer. Requires Zn(2+) as cofactor.

It is found in the cytoplasm. The enzyme catalyses tRNA(Thr) + L-threonine + ATP = L-threonyl-tRNA(Thr) + AMP + diphosphate + H(+). In terms of biological role, catalyzes the attachment of threonine to tRNA(Thr) in a two-step reaction: L-threonine is first activated by ATP to form Thr-AMP and then transferred to the acceptor end of tRNA(Thr). Also edits incorrectly charged L-seryl-tRNA(Thr). This is Threonine--tRNA ligase from Methanoculleus marisnigri (strain ATCC 35101 / DSM 1498 / JR1).